A 464-amino-acid polypeptide reads, in one-letter code: ERO1-like protein alpha (464 aa).

The signal sequence occupies residues 1–23; that stretch reads MGRGWGLLVGLLGVVWLLRSGQG. 8 disulfides stabilise this stretch: C35–C48, C37–C46, C85–C387, C94–C99, C94–C130, C99–C104, C207–C237, and C390–C393. Phosphoserine is present on residues S106, S142, and S144. Positions 186, 188, and 199 each coordinate FAD. Residues S248 and H251 each coordinate FAD. Residue N276 is glycosylated (N-linked (GlcNAc...) asparagine). FAD-binding residues include R283 and R296. A glycan (N-linked (GlcNAc...) asparagine) is linked at N380.

Belongs to the EROs family. Predominantly monomer. May function both as a monomer and a homodimer. Interacts with PDILT. Interacts with ERP44; the interaction results in retention of ERO1A in the endoplasmic reticulum. It depends on FAD as a cofactor. N-glycosylated. Post-translationally, the Cys-94/Cys-99 and Cys-390/Cys-393 disulfide bonds constitute the redox-active center. The Cys-94/Cys-99 disulfide bond may accept electron from P4HB and funnel them to the active site disulfide Cys-390/Cys-393. The regulatory Cys-99/Cys-104 disulfide bond stabilizes the other regulatory bond Cys-94/Cys-130. In terms of processing, phosphorylated on Ser-144 by FAM20C in the Golgi which increases its enzymatic activity. Phosphorylation is induced by lactation. It is also induced by hypoxia and reductive stress.

The protein resides in the endoplasmic reticulum membrane. Its subcellular location is the golgi apparatus lumen. The protein localises to the secreted. It localises to the cell projection. It is found in the dendrite. Its activity is regulated as follows. Enzyme activity is tightly regulated to prevent the accumulation of reactive oxygen species in the endoplasmic reticulum. Reversibly down-regulated by the formation of disulfide bonds between the active site Cys-94 and Cys-130, and between Cys-99 and Cys-104. Glutathione may be required to regulate its activity in the endoplasmic reticulum. Functionally, oxidoreductase involved in disulfide bond formation in the endoplasmic reticulum. Efficiently reoxidizes P4HB/PDI, the enzyme catalyzing protein disulfide formation, in order to allow P4HB to sustain additional rounds of disulfide formation. Following P4HB reoxidation, passes its electrons to molecular oxygen via FAD, leading to the production of reactive oxygen species (ROS) in the cell. Required for the proper folding of immunoglobulins. Plays an important role in ER stress-induced, CHOP-dependent apoptosis by activating the inositol 1,4,5-trisphosphate receptor IP3R1. This Rattus norvegicus (Rat) protein is ERO1-like protein alpha.